The sequence spans 400 residues: CinA-like protein (400 aa).

It belongs to the CinA family.

The sequence is that of CinA-like protein from Escherichia coli O9:H4 (strain HS).